A 406-amino-acid chain; its full sequence is Enoyl-[acyl-carrier-protein] reductase [NADH] (406 aa).

Residues 48-53, 74-75, 111-112, and 140-141 contribute to the NAD(+) site; these read GASTGF, FE, DA, and IA. Y226 contacts substrate. The active-site Proton donor is the Y236. NAD(+) contacts are provided by residues K245 and 275–277; that span reads LVT.

Belongs to the TER reductase family. Monomer.

The enzyme catalyses a 2,3-saturated acyl-[ACP] + NAD(+) = a (2E)-enoyl-[ACP] + NADH + H(+). It participates in lipid metabolism; fatty acid biosynthesis. Functionally, involved in the final reduction of the elongation cycle of fatty acid synthesis (FAS II). Catalyzes the reduction of a carbon-carbon double bond in an enoyl moiety that is covalently linked to an acyl carrier protein (ACP). The sequence is that of Enoyl-[acyl-carrier-protein] reductase [NADH] from Coxiella burnetii (strain RSA 331 / Henzerling II).